Consider the following 384-residue polypeptide: Probable 2-heptyl-3-hydroxy-4(1H)-quinolone synthase AqdB2 (384 aa).

It belongs to the 3-hydroxybenzoate 6-hydroxylase family.

The catalysed reaction is 2-heptyl-4(1H)-quinolone + NADH + O2 + H(+) = 2-heptyl-3-hydroxy-4(1H)-quinolone + NAD(+) + H2O. Its function is as follows. Involved in the degradation of the Pseudomonas aeruginosa quorum sensing signal molecule HHQ (2-heptyl-4-quinolone) to anthranilic acid. Probably catalyzes the hydroxylation of HHQ to PQS (2-heptyl-3-hydroxy-4-quinolone). This Rhodococcus erythropolis (Arthrobacter picolinophilus) protein is Probable 2-heptyl-3-hydroxy-4(1H)-quinolone synthase AqdB2.